The chain runs to 209 residues: Ribosomal RNA large subunit methyltransferase E (209 aa).

S-adenosyl-L-methionine contacts are provided by G63, W65, D83, D99, and D124. K164 acts as the Proton acceptor in catalysis.

The protein belongs to the class I-like SAM-binding methyltransferase superfamily. RNA methyltransferase RlmE family.

It localises to the cytoplasm. The catalysed reaction is uridine(2552) in 23S rRNA + S-adenosyl-L-methionine = 2'-O-methyluridine(2552) in 23S rRNA + S-adenosyl-L-homocysteine + H(+). In terms of biological role, specifically methylates the uridine in position 2552 of 23S rRNA at the 2'-O position of the ribose in the fully assembled 50S ribosomal subunit. The chain is Ribosomal RNA large subunit methyltransferase E from Proteus mirabilis (strain HI4320).